A 239-amino-acid chain; its full sequence is MIINAKGPASFAEKYIVRSIWEDKFPPGSILPAERELSELIGVTRTTLREVLQRLARDGWLTIQHGKPTRVNNFWETSGLNILETIAELNPDGFPELVDQLLSARSSVSAIYFRGAIRNNPEEAIEALSHLSELEDTAQAYAEFDYQLQHTLAFSSGNPLYVLILNGFKGLYSRVGRYYFSSAEARALAMDFYKQLQQLAIDKNYTDVPALMRTYGINSGVMWQSLRDDMPVDLGYSDN.

An HTH gntR-type domain is found at 6 to 74 (KGPASFAEKY…HGKPTRVNNF (69 aa)). The segment at residues 34-53 (ERELSELIGVTRTTLREVLQ) is a DNA-binding region (H-T-H motif).

Homodimer.

It localises to the cytoplasm. Functionally, multifunctional regulator of fatty acid metabolism. The chain is Fatty acid metabolism regulator protein from Shewanella pealeana (strain ATCC 700345 / ANG-SQ1).